We begin with the raw amino-acid sequence, 409 residues long: UDP-N-acetylglucosamine--N-acetylmuramyl-(pentapeptide) pyrophosphoryl-undecaprenol N-acetylglucosamine transferase (409 aa).

UDP-N-acetyl-alpha-D-glucosamine-binding positions include 11–13, Asn125, Arg169, Ser199, and Gln299; that span reads TGG.

This sequence belongs to the glycosyltransferase 28 family. MurG subfamily.

The protein localises to the cell membrane. It carries out the reaction di-trans,octa-cis-undecaprenyl diphospho-N-acetyl-alpha-D-muramoyl-L-alanyl-D-glutamyl-meso-2,6-diaminopimeloyl-D-alanyl-D-alanine + UDP-N-acetyl-alpha-D-glucosamine = di-trans,octa-cis-undecaprenyl diphospho-[N-acetyl-alpha-D-glucosaminyl-(1-&gt;4)]-N-acetyl-alpha-D-muramoyl-L-alanyl-D-glutamyl-meso-2,6-diaminopimeloyl-D-alanyl-D-alanine + UDP + H(+). Its pathway is cell wall biogenesis; peptidoglycan biosynthesis. In terms of biological role, cell wall formation. Catalyzes the transfer of a GlcNAc subunit on undecaprenyl-pyrophosphoryl-MurNAc-pentapeptide (lipid intermediate I) to form undecaprenyl-pyrophosphoryl-MurNAc-(pentapeptide)GlcNAc (lipid intermediate II). In Clostridioides difficile (strain 630) (Peptoclostridium difficile), this protein is UDP-N-acetylglucosamine--N-acetylmuramyl-(pentapeptide) pyrophosphoryl-undecaprenol N-acetylglucosamine transferase.